Reading from the N-terminus, the 565-residue chain is Dihydroxy-acid dehydratase (565 aa).

Cys-50 contributes to the [2Fe-2S] cluster binding site. Asp-82 contacts Mg(2+). Cys-123 provides a ligand contact to [2Fe-2S] cluster. The Mg(2+) site is built by Asp-124 and Lys-125. Residue Lys-125 is modified to N6-carboxylysine. Residue Cys-195 participates in [2Fe-2S] cluster binding. Glu-447 contacts Mg(2+). Ser-473 serves as the catalytic Proton acceptor.

Belongs to the IlvD/Edd family. In terms of assembly, homodimer. It depends on [2Fe-2S] cluster as a cofactor. Mg(2+) is required as a cofactor.

It carries out the reaction (2R)-2,3-dihydroxy-3-methylbutanoate = 3-methyl-2-oxobutanoate + H2O. The enzyme catalyses (2R,3R)-2,3-dihydroxy-3-methylpentanoate = (S)-3-methyl-2-oxopentanoate + H2O. Its pathway is amino-acid biosynthesis; L-isoleucine biosynthesis; L-isoleucine from 2-oxobutanoate: step 3/4. The protein operates within amino-acid biosynthesis; L-valine biosynthesis; L-valine from pyruvate: step 3/4. Functionally, functions in the biosynthesis of branched-chain amino acids. Catalyzes the dehydration of (2R,3R)-2,3-dihydroxy-3-methylpentanoate (2,3-dihydroxy-3-methylvalerate) into 2-oxo-3-methylpentanoate (2-oxo-3-methylvalerate) and of (2R)-2,3-dihydroxy-3-methylbutanoate (2,3-dihydroxyisovalerate) into 2-oxo-3-methylbutanoate (2-oxoisovalerate), the penultimate precursor to L-isoleucine and L-valine, respectively. This chain is Dihydroxy-acid dehydratase, found in Halorhodospira halophila (strain DSM 244 / SL1) (Ectothiorhodospira halophila (strain DSM 244 / SL1)).